Consider the following 151-residue polypeptide: 3-hydroxyacyl-[acyl-carrier-protein] dehydratase FabZ (151 aa).

Histidine 58 is an active-site residue.

This sequence belongs to the thioester dehydratase family. FabZ subfamily.

Its subcellular location is the cytoplasm. It catalyses the reaction a (3R)-hydroxyacyl-[ACP] = a (2E)-enoyl-[ACP] + H2O. Involved in unsaturated fatty acids biosynthesis. Catalyzes the dehydration of short chain beta-hydroxyacyl-ACPs and long chain saturated and unsaturated beta-hydroxyacyl-ACPs. The sequence is that of 3-hydroxyacyl-[acyl-carrier-protein] dehydratase FabZ from Histophilus somni (strain 129Pt) (Haemophilus somnus).